The sequence spans 223 residues: Sugar fermentation stimulation protein homolog (223 aa).

Belongs to the SfsA family.

This chain is Sugar fermentation stimulation protein homolog, found in Thermosipho melanesiensis (strain DSM 12029 / CIP 104789 / BI429).